The sequence spans 233 residues: 7-cyano-7-deazaguanine synthase (233 aa).

ATP is bound at residue Leu8–Met18. Positions 186, 194, 197, and 200 each coordinate Zn(2+).

This sequence belongs to the QueC family. Homodimer. Zn(2+) serves as cofactor.

The catalysed reaction is 7-carboxy-7-deazaguanine + NH4(+) + ATP = 7-cyano-7-deazaguanine + ADP + phosphate + H2O + H(+). Its pathway is purine metabolism; 7-cyano-7-deazaguanine biosynthesis. Its function is as follows. Catalyzes the ATP-dependent conversion of 7-carboxy-7-deazaguanine (CDG) to 7-cyano-7-deazaguanine (preQ(0)). This Desulfitobacterium hafniense (strain DSM 10664 / DCB-2) protein is 7-cyano-7-deazaguanine synthase.